The following is a 259-amino-acid chain: Activator of lactoyl-CoA dehydratase (259 aa).

Residues Cys-125 and Cys-164 each coordinate [4Fe-4S] cluster.

In terms of assembly, homodimer. The cofactor is [4Fe-4S] cluster.

Functionally, required for the activation of lactoyl-CoA dehydratase. This protein is extremely sensitive towards oxygen. The protein is Activator of lactoyl-CoA dehydratase (lcdC) of Anaerotignum propionicum (Clostridium propionicum).